The following is a 250-amino-acid chain: Probable transcriptional regulatory protein MAP_1030 (250 aa).

Belongs to the TACO1 family.

It is found in the cytoplasm. This Mycolicibacterium paratuberculosis (strain ATCC BAA-968 / K-10) (Mycobacterium paratuberculosis) protein is Probable transcriptional regulatory protein MAP_1030.